Consider the following 236-residue polypeptide: uncharacterized protein (236 aa).

7 helical membrane passes run 32 to 52 (MALA…VEPI), 61 to 81 (FGTI…MGFG), 90 to 110 (ILFW…ALIY), 115 to 135 (IART…YGYS), 144 to 164 (GSFF…NLFL), 167 to 187 (SSLS…LIAW), and 208 to 228 (LSIM…LYLM).

It belongs to the BI1 family.

It is found in the cell membrane. This is an uncharacterized protein from Rickettsia prowazekii (strain Madrid E).